A 423-amino-acid polypeptide reads, in one-letter code: Serine--tRNA ligase (423 aa).

The span at 1 to 12 (MIDLKALRENPD) shows a compositional bias: basic and acidic residues. Residues 1-26 (MIDLKALRENPDVGRASQRSRGEDPE) are disordered. An L-serine-binding site is contributed by 230 to 232 (TSE). ATP-binding positions include 261–263 (RRE) and valine 277. Glutamate 284 lines the L-serine pocket. 348 to 351 (ELTS) contributes to the ATP binding site. An L-serine-binding site is contributed by threonine 383.

The protein belongs to the class-II aminoacyl-tRNA synthetase family. Type-1 seryl-tRNA synthetase subfamily. Homodimer. The tRNA molecule binds across the dimer.

The protein resides in the cytoplasm. The enzyme catalyses tRNA(Ser) + L-serine + ATP = L-seryl-tRNA(Ser) + AMP + diphosphate + H(+). It carries out the reaction tRNA(Sec) + L-serine + ATP = L-seryl-tRNA(Sec) + AMP + diphosphate + H(+). The protein operates within aminoacyl-tRNA biosynthesis; selenocysteinyl-tRNA(Sec) biosynthesis; L-seryl-tRNA(Sec) from L-serine and tRNA(Sec): step 1/1. Catalyzes the attachment of serine to tRNA(Ser). Is also able to aminoacylate tRNA(Sec) with serine, to form the misacylated tRNA L-seryl-tRNA(Sec), which will be further converted into selenocysteinyl-tRNA(Sec). The sequence is that of Serine--tRNA ligase from Beutenbergia cavernae (strain ATCC BAA-8 / DSM 12333 / CCUG 43141 / JCM 11478 / NBRC 16432 / NCIMB 13614 / HKI 0122).